We begin with the raw amino-acid sequence, 219 residues long: Ribosome maturation factor RimP (219 aa).

A disordered region spans residues 195–219 (EGRIPGDDLGAEPEDVASTETQEKK).

It belongs to the RimP family.

Its subcellular location is the cytoplasm. Its function is as follows. Required for maturation of 30S ribosomal subunits. The protein is Ribosome maturation factor RimP of Brucella abortus (strain S19).